Reading from the N-terminus, the 694-residue chain is Polyribonucleotide nucleotidyltransferase (694 aa).

Mg(2+)-binding residues include Asp-485 and Asp-491. Residues 552 to 611 enclose the KH domain; the sequence is PRIETMQIKPNKIATVIGPGGKQIRQIIEEAGVQIDINDSGLVSISASSPQAIEKAKSMI. Residues 621–689 form the S1 motif domain; sequence GKIYEGRVTS…EKGQYKLSHK (69 aa).

The protein belongs to the polyribonucleotide nucleotidyltransferase family. Mg(2+) is required as a cofactor.

The protein localises to the cytoplasm. It carries out the reaction RNA(n+1) + phosphate = RNA(n) + a ribonucleoside 5'-diphosphate. Functionally, involved in mRNA degradation. Catalyzes the phosphorolysis of single-stranded polyribonucleotides processively in the 3'- to 5'-direction. In Chlamydia caviae (strain ATCC VR-813 / DSM 19441 / 03DC25 / GPIC) (Chlamydophila caviae), this protein is Polyribonucleotide nucleotidyltransferase.